Reading from the N-terminus, the 304-residue chain is uncharacterized protein (304 aa).

This is an uncharacterized protein from Methanocaldococcus jannaschii (strain ATCC 43067 / DSM 2661 / JAL-1 / JCM 10045 / NBRC 100440) (Methanococcus jannaschii).